The primary structure comprises 341 residues: NADH-ubiquinone oxidoreductase chain 2 (341 aa).

10 helical membrane-spanning segments follow: residues isoleucine 8 to leucine 28, phenylalanine 61 to alanine 81, methionine 95 to proline 115, leucine 121 to isoleucine 141, isoleucine 146 to leucine 166, leucine 174 to glutamate 194, serine 195 to phenylalanine 215, phenylalanine 238 to proline 258, phenylalanine 273 to cysteine 293, and leucine 321 to leucine 341.

It belongs to the complex I subunit 2 family.

It localises to the mitochondrion inner membrane. It catalyses the reaction a ubiquinone + NADH + 5 H(+)(in) = a ubiquinol + NAD(+) + 4 H(+)(out). Core subunit of the mitochondrial membrane respiratory chain NADH dehydrogenase (Complex I) that is believed to belong to the minimal assembly required for catalysis. Complex I functions in the transfer of electrons from NADH to the respiratory chain. The immediate electron acceptor for the enzyme is believed to be ubiquinone. This chain is NADH-ubiquinone oxidoreductase chain 2 (mt:ND2), found in Drosophila yakuba (Fruit fly).